Here is a 430-residue protein sequence, read N- to C-terminus: UDP-N-acetylmuramoylalanine--D-glutamate ligase (430 aa).

ATP is bound at residue 109–115 (GTDGKST).

This sequence belongs to the MurCDEF family.

The protein localises to the cytoplasm. The enzyme catalyses UDP-N-acetyl-alpha-D-muramoyl-L-alanine + D-glutamate + ATP = UDP-N-acetyl-alpha-D-muramoyl-L-alanyl-D-glutamate + ADP + phosphate + H(+). It participates in cell wall biogenesis; peptidoglycan biosynthesis. Its function is as follows. Cell wall formation. Catalyzes the addition of glutamate to the nucleotide precursor UDP-N-acetylmuramoyl-L-alanine (UMA). This Thermotoga sp. (strain RQ2) protein is UDP-N-acetylmuramoylalanine--D-glutamate ligase.